A 34-amino-acid polypeptide reads, in one-letter code: ACSGRGSRCPPQCCMGLRCGRGNPQKCIGAHEDV.

3 cysteine pairs are disulfide-bonded: Cys2-Cys14, Cys9-Cys19, and Cys13-Cys27. Residues Pro10 and Pro11 each carry the 4-hydroxyproline modification. Glu32 carries the post-translational modification 4-carboxyglutamate.

In terms of tissue distribution, expressed by the venom duct.

Its subcellular location is the secreted. Mu-conotoxins block voltage-gated sodium channels (Nav). No effect was observed upon injections into mice and goldfish (25 ug). The chain is Mu-conotoxin GS from Conus geographus (Geography cone).